A 1097-amino-acid chain; its full sequence is DNA-directed RNA polymerase subunit beta (1097 aa).

Belongs to the RNA polymerase beta chain family. In plastids the minimal PEP RNA polymerase catalytic core is composed of four subunits: alpha, beta, beta', and beta''. When a (nuclear-encoded) sigma factor is associated with the core the holoenzyme is formed, which can initiate transcription.

It localises to the plastid. Its subcellular location is the chloroplast. The catalysed reaction is RNA(n) + a ribonucleoside 5'-triphosphate = RNA(n+1) + diphosphate. In terms of biological role, DNA-dependent RNA polymerase catalyzes the transcription of DNA into RNA using the four ribonucleoside triphosphates as substrates. The sequence is that of DNA-directed RNA polymerase subunit beta from Rhodomonas salina (Cryptomonas salina).